We begin with the raw amino-acid sequence, 267 residues long: tRNA pseudouridine synthase A (267 aa).

Aspartate 54 serves as the catalytic Nucleophile. Tyrosine 112 is a binding site for substrate.

It belongs to the tRNA pseudouridine synthase TruA family. In terms of assembly, homodimer.

It catalyses the reaction uridine(38/39/40) in tRNA = pseudouridine(38/39/40) in tRNA. In terms of biological role, formation of pseudouridine at positions 38, 39 and 40 in the anticodon stem and loop of transfer RNAs. The polypeptide is tRNA pseudouridine synthase A (Bordetella avium (strain 197N)).